Consider the following 527-residue polypeptide: Putative GTP-binding protein 6 (527 aa).

In terms of domain architecture, Hflx-type G spans 306-470 (PIISILGYTN…QVETAVMKST (165 aa)). GTP is bound by residues 312-319 (GYTNSGKT), 338-342 (FATLD), 360-363 (DTIG), 429-432 (NKID), and 448-450 (SAL). Positions 319 and 340 each coordinate Mg(2+).

This sequence belongs to the TRAFAC class OBG-HflX-like GTPase superfamily. HflX GTPase family. Requires Mg(2+) as cofactor.

This Xenopus laevis (African clawed frog) protein is Putative GTP-binding protein 6 (gtpbp6).